Reading from the N-terminus, the 81-residue chain is U-megalopygitoxin(3)-Mo4 (81 aa).

A signal peptide spans 1-20 (MNSKFVLIVVFLAVVSICFA).

The protein belongs to the caterpillar 3 family. In terms of processing, contains 3 disulfide bonds. Expressed by the venom apparatus.

It is found in the secreted. Its function is as follows. Probable toxin. The polypeptide is U-megalopygitoxin(3)-Mo4 (Megalopyge opercularis (Southern flannel moth)).